Here is a 474-residue protein sequence, read N- to C-terminus: Protein FAM161A (474 aa).

Disordered stretches follow at residues 78 to 126 (SSSS…PGEI), 185 to 210 (QKRR…DDAE), and 308 to 364 (REEL…DQGL). Residues 188-250 (REKASDAQET…KKTRERSKAA (63 aa)) are a coiled coil. A required for interaction with CFAP418 region spans residues 274-454 (KLRELCRAKK…PTASSRGREQ (181 aa)). Polar residues predominate over residues 325 to 335 (LQSSPWPSHST). Glycyl lysine isopeptide (Lys-Gly) (interchain with G-Cter in SUMO2) cross-links involve residues K397 and K413. Residues 412 to 474 (LKETRRPNPS…KELARIGGAR (63 aa)) are disordered. The segment covering 422-431 (PRHKSPRRSA) has biased composition (basic residues). Positions 450–468 (RGREQAIRRSEKARMKELA) are enriched in basic and acidic residues.

The protein belongs to the FAM161 family. As to quaternary structure, interacts (via central region) with CFAP418 (via N-terminus); the interaction is direct. Interacts (via C-terminus) with microtubules. Interacts with LCA5. Interacts with CEP290. Interacts with SDCCAG8. Interacts with FAM161B. Interacts with POC1B. Interacts with CEP78. Forms a microtubule-associated complex with POC5, CETN2 and POC1B. Interacts with CCDC15. Expressed in the retina and kidney.

The protein localises to the cytoplasm. The protein resides in the cytoskeleton. It is found in the cilium basal body. Its subcellular location is the cell projection. It localises to the cilium. The protein localises to the microtubule organizing center. The protein resides in the centrosome. It is found in the centriole. In terms of biological role, involved in ciliogenesis. This is Protein FAM161A from Rattus norvegicus (Rat).